Reading from the N-terminus, the 421-residue chain is Enolase (421 aa).

Gln165 serves as a coordination point for (2R)-2-phosphoglycerate. Glu207 serves as the catalytic Proton donor. Mg(2+) contacts are provided by Asp244, Glu285, and Asp312. Residues Lys337, Arg366, Ser367, and Lys388 each coordinate (2R)-2-phosphoglycerate. Lys337 (proton acceptor) is an active-site residue.

Belongs to the enolase family. Mg(2+) serves as cofactor.

It localises to the cytoplasm. Its subcellular location is the secreted. The protein resides in the cell surface. It carries out the reaction (2R)-2-phosphoglycerate = phosphoenolpyruvate + H2O. The protein operates within carbohydrate degradation; glycolysis; pyruvate from D-glyceraldehyde 3-phosphate: step 4/5. In terms of biological role, catalyzes the reversible conversion of 2-phosphoglycerate (2-PG) into phosphoenolpyruvate (PEP). It is essential for the degradation of carbohydrates via glycolysis. In Ehrlichia canis (strain Jake), this protein is Enolase.